Here is a 390-residue protein sequence, read N- to C-terminus: Small ribosomal subunit protein uS9m (390 aa).

The interval 368-390 is disordered; the sequence is PRIRERKKPGQEGARRKFTWKKR.

The protein belongs to the universal ribosomal protein uS9 family. As to quaternary structure, component of the mitochondrial ribosome small subunit (28S) which comprises a 12S rRNA and about 30 distinct proteins.

The protein localises to the mitochondrion. This is Small ribosomal subunit protein uS9m (Mrps9) from Mus musculus (Mouse).